The sequence spans 683 residues: Methionine--tRNA ligase (683 aa).

Positions 15-25 (YYPSGKLHIGN) match the 'HIGH' region motif. Positions 311–315 (KMSKS) match the 'KMSKS' region motif. Lys-314 contacts ATP. The tRNA-binding domain maps to 581–683 (DFDKVELKVA…DNMVNGSLIS (103 aa)).

This sequence belongs to the class-I aminoacyl-tRNA synthetase family. MetG type 2B subfamily. As to quaternary structure, homodimer.

Its subcellular location is the cytoplasm. It catalyses the reaction tRNA(Met) + L-methionine + ATP = L-methionyl-tRNA(Met) + AMP + diphosphate. Functionally, is required not only for elongation of protein synthesis but also for the initiation of all mRNA translation through initiator tRNA(fMet) aminoacylation. This chain is Methionine--tRNA ligase, found in Lactiplantibacillus plantarum (strain ATCC BAA-793 / NCIMB 8826 / WCFS1) (Lactobacillus plantarum).